Consider the following 178-residue polypeptide: Crossover junction endodeoxyribonuclease RuvC (178 aa).

Active-site residues include Asp-11, Glu-71, and Asp-143. Positions 11, 71, and 143 each coordinate Mg(2+).

Belongs to the RuvC family. Homodimer which binds Holliday junction (HJ) DNA. The HJ becomes 2-fold symmetrical on binding to RuvC with unstacked arms; it has a different conformation from HJ DNA in complex with RuvA. In the full resolvosome a probable DNA-RuvA(4)-RuvB(12)-RuvC(2) complex forms which resolves the HJ. Mg(2+) is required as a cofactor.

Its subcellular location is the cytoplasm. It catalyses the reaction Endonucleolytic cleavage at a junction such as a reciprocal single-stranded crossover between two homologous DNA duplexes (Holliday junction).. Functionally, the RuvA-RuvB-RuvC complex processes Holliday junction (HJ) DNA during genetic recombination and DNA repair. Endonuclease that resolves HJ intermediates. Cleaves cruciform DNA by making single-stranded nicks across the HJ at symmetrical positions within the homologous arms, yielding a 5'-phosphate and a 3'-hydroxyl group; requires a central core of homology in the junction. The consensus cleavage sequence is 5'-(A/T)TT(C/G)-3'. Cleavage occurs on the 3'-side of the TT dinucleotide at the point of strand exchange. HJ branch migration catalyzed by RuvA-RuvB allows RuvC to scan DNA until it finds its consensus sequence, where it cleaves and resolves the cruciform DNA. This chain is Crossover junction endodeoxyribonuclease RuvC, found in Neisseria meningitidis serogroup A / serotype 4A (strain DSM 15465 / Z2491).